A 904-amino-acid chain; its full sequence is NADH-quinone oxidoreductase subunit G (904 aa).

Positions 1–83 constitute a 2Fe-2S ferredoxin-type domain; the sequence is MATIHVDGKE…GSWISIDDEE (83 aa). The [2Fe-2S] cluster site is built by cysteine 34, cysteine 45, cysteine 48, and cysteine 67. In terms of domain architecture, 4Fe-4S His(Cys)3-ligated-type spans 83–122; that stretch reads EAKVFRASVVEWLMTNHPHDCPVCEEGGHCHLQDMTVMTG. Histidine 99, cysteine 103, cysteine 106, cysteine 112, cysteine 151, cysteine 154, cysteine 157, cysteine 201, cysteine 228, cysteine 231, cysteine 235, and cysteine 263 together coordinate [4Fe-4S] cluster. A 4Fe-4S Mo/W bis-MGD-type domain is found at 221–277; it reads MQFSPSICHGCSSGCNISPGERYGELRRIENRFNGSVNQYFLCDRGRFGYGYVNRKD.

It belongs to the complex I 75 kDa subunit family. As to quaternary structure, composed of 13 different subunits. Subunits NuoCD, E, F, and G constitute the peripheral sector of the complex. It depends on [2Fe-2S] cluster as a cofactor. [4Fe-4S] cluster is required as a cofactor.

The catalysed reaction is a quinone + NADH + 5 H(+)(in) = a quinol + NAD(+) + 4 H(+)(out). NDH-1 shuttles electrons from NADH, via FMN and iron-sulfur (Fe-S) centers, to quinones in the respiratory chain. The immediate electron acceptor for the enzyme in this species is believed to be ubiquinone. Couples the redox reaction to proton translocation (for every two electrons transferred, four hydrogen ions are translocated across the cytoplasmic membrane), and thus conserves the redox energy in a proton gradient. Required for plants roots colonization. This Pseudomonas fluorescens protein is NADH-quinone oxidoreductase subunit G (nuoG).